Here is a 102-residue protein sequence, read N- to C-terminus: Small ribosomal subunit protein uS10 (102 aa).

It belongs to the universal ribosomal protein uS10 family. In terms of assembly, part of the 30S ribosomal subunit.

Its function is as follows. Involved in the binding of tRNA to the ribosomes. This chain is Small ribosomal subunit protein uS10, found in Exiguobacterium sp. (strain ATCC BAA-1283 / AT1b).